A 712-amino-acid polypeptide reads, in one-letter code: Polyribonucleotide nucleotidyltransferase (712 aa).

Positions 487 and 493 each coordinate Mg(2+). One can recognise a KH domain in the interval 554–613 (PKIITMTINPDKIRDVIGPSGKQINKIIEETGVKIDIEQDGTVFISSINQEMNDKAKKII). The 69-residue stretch at 623–691 (GEIYEGKVKR…KQGRVNLSRK (69 aa)) folds into the S1 motif domain.

It belongs to the polyribonucleotide nucleotidyltransferase family. It depends on Mg(2+) as a cofactor.

Its subcellular location is the cytoplasm. It catalyses the reaction RNA(n+1) + phosphate = RNA(n) + a ribonucleoside 5'-diphosphate. Its function is as follows. Involved in mRNA degradation. Catalyzes the phosphorolysis of single-stranded polyribonucleotides processively in the 3'- to 5'-direction. The sequence is that of Polyribonucleotide nucleotidyltransferase from Bacillus cereus (strain G9842).